Consider the following 259-residue polypeptide: Thiamine thiazole synthase (259 aa).

NAD(+) contacts are provided by residues Ala33, 52-53, Gly60, Val124, and 152-154; these read ER and HVD. Positions 154 and 169 each coordinate Fe cation. Met219 contacts NAD(+). Arg229 lines the glycine pocket.

It belongs to the THI4 family. As to quaternary structure, homooctamer; tetramer of dimers. It depends on Fe(2+) as a cofactor.

It carries out the reaction hydrogen sulfide + glycine + NAD(+) = ADP-5-ethyl-4-methylthiazole-2-carboxylate + nicotinamide + 3 H2O + H(+). The protein operates within cofactor biosynthesis; thiamine diphosphate biosynthesis. Involved in the biosynthesis of the thiazole moiety of thiamine. Catalyzes the conversion of NAD and glycine to adenosine diphosphate 5-(2-hydroxyethyl)-4-methylthiazole-2-carboxylate (ADT), an adenylated thiazole intermediate, using free sulfide as a source of sulfur. The polypeptide is Thiamine thiazole synthase (Pyrobaculum neutrophilum (strain DSM 2338 / JCM 9278 / NBRC 100436 / V24Sta) (Thermoproteus neutrophilus)).